The primary structure comprises 476 residues: Zinc finger CCCH domain-containing protein 6 (476 aa).

Residues 1–10 are compositionally biased toward low complexity; sequence MEQPHAAAAA. Residues 1-57 form a disordered region; that stretch reads MEQPHAAAAAAGGGEGEGGASPDTGLEGPMWRMGLGGGGGGGGGGGGGDGDAAGRLP. Over residues 34-51 the composition is skewed to gly residues; sequence GLGGGGGGGGGGGGGDGD. C3H1-type zinc fingers lie at residues 59 to 87, 108 to 136, and 153 to 181; these read RPGE…HPRD, RAGQ…HPKQ, and RLGE…HPEF. The segment covering 290–301 has biased composition (polar residues); it reads SSTGQSSNNQQE. Residues 290-309 form a disordered region; the sequence is SSTGQSSNNQQEHGFPERPG. 2 C3H1-type zinc fingers span residues 307-335 and 353-381; these read RPGQ…HPRE and RPGA…HPMG. The disordered stretch occupies residues 456–476; it reads TMMRAQTNTTSGGSSSPGGGR.

It is found in the nucleus. The chain is Zinc finger CCCH domain-containing protein 6 from Oryza sativa subsp. japonica (Rice).